The sequence spans 314 residues: MRVCRTLKISIKSFPSSLSLLSLYKRRLHKSTSHSSTATSSHYSKNNLPSDSPDLLFDYFIDGHKIHVNPNAVEPLHLRRNADVVGFSLPHGVKQSFENYIQKYPLSDQVENSSNIYDPSSPPDSPRKQQTHLGTIPPEHPDVFFHNLKKKLDSLHTHSSPLTVYRNHLLTCETDSALAQLFKSEIYQQLSDFRRDFPLSHALRDTMLIARLNFLNPMLALSFFQAVKKHSPNAYVRGCSAPVYNQAILSVWQGCKDPNFVLHLLGEMRENVVMRDSETREAINIVYKDVNEWPKQLLFSQNRILEKLKIFLLP.

Residues 111–136 (ENSSNIYDPSSPPDSPRKQQTHLGTI) are disordered.

Component of the MRH5C complex, composed of mrh5, ppr4, mtf2, and sls1. Proteins mtf2 and sls1 form a subcomplex that serves as a scaffold to bring mrh5 and ppr4 together. The MRH5C complex associates with the small subunit of the mitochondrial ribosome.

In terms of biological role, translation activation factor that as part of the MRH5C complex specifically recruits cox1 mRNA to the mitochondrial ribosome for translation initiation. The chain is Mitochondrial translation factor 2 from Schizosaccharomyces pombe (strain 972 / ATCC 24843) (Fission yeast).